A 708-amino-acid chain; its full sequence is DNA-directed RNA polymerase III subunit RPC5 (708 aa).

The segment covering 146–155 has biased composition (basic and acidic residues); the sequence is DAKHREREAA. The disordered stretch occupies residues 146–170; that stretch reads DAKHREREAANEAGDSSQDEAEDDV. A phosphoserine mark is found at serine 161 and serine 162. Lysine 171 is covalently cross-linked (Glycyl lysine isopeptide (Lys-Gly) (interchain with G-Cter in SUMO2)). Serine 192 is modified (phosphoserine). At tyrosine 224 the chain carries Phosphotyrosine. Lysine 432 participates in a covalent cross-link: Glycyl lysine isopeptide (Lys-Gly) (interchain with G-Cter in SUMO2). Positions 485-552 are disordered; that stretch reads QLRVPAVPPG…DSFNGHPPQG (68 aa). Residue lysine 498 forms a Glycyl lysine isopeptide (Lys-Gly) (interchain with G-Cter in SUMO1); alternate linkage. Lysine 498 is covalently cross-linked (Glycyl lysine isopeptide (Lys-Gly) (interchain with G-Cter in SUMO2); alternate). The segment covering 502–519 has biased composition (acidic residues); it reads VSEEGEEDEEQEAEEEPM. 2 positions are modified to phosphoserine: serine 503 and serine 522. Residues 556-708 are required for Pol III complex stability; it reads TPVARELKAF…MWYLKGTVQS (153 aa). Lysine 659 participates in a covalent cross-link: Glycyl lysine isopeptide (Lys-Gly) (interchain with G-Cter in SUMO2).

As to quaternary structure, component of the RNA polymerase III complex consisting of at least 17 subunits: a ten-subunit horseshoe-shaped catalytic core composed of POLR3A/RPC1, POLR3B/RPC2, POLR1C/RPAC1, POLR1D/RPAC2, POLR3K/RPC10, POLR2E/RPABC1, POLR2F/RPABC2, POLR2H/RPABC3, POLR2K/RPABC4 and POLR2L/RPABC5; the stalk composed of two subunits POLR3H/RPC8 and CRCP/RPC9, forming a structural mobile part that protrudes out of the core and functions primarily in transcription initiation; and additional subunits homologous to general transcription factors of the RNA polymerase II machinery, POLR3D/RPC4-POLR3E/RPC5 heterodimer and POLR3/CRPC3-POLR3F/RPC6-POLR3G/RPC7 heterotrimer.

The protein resides in the nucleus. DNA-dependent RNA polymerase catalyzes the transcription of DNA into RNA using the four ribonucleoside triphosphates as substrates. Specific peripheric component of RNA polymerase III (Pol III) which synthesizes small non-coding RNAs including 5S rRNA, snRNAs, tRNAs and miRNAs from at least 500 distinct genomic loci. Assembles with POLR3D/RPC4 forming a subcomplex that binds the Pol III core. Enables recruitment of Pol III at transcription initiation site and drives transcription initiation from both type 2 and type 3 DNA promoters. Required for efficient transcription termination and reinitiation. Plays a key role in sensing and limiting infection by intracellular bacteria and DNA viruses. Acts as a nuclear and cytosolic DNA sensor involved in innate immune response. Can sense non-self dsDNA that serves as template for transcription into dsRNA. The non-self RNA polymerase III transcripts, such as Epstein-Barr virus-encoded RNAs (EBERs) induce type I interferon and NF-kappa-B through the RIG-I pathway. The sequence is that of DNA-directed RNA polymerase III subunit RPC5 from Homo sapiens (Human).